A 683-amino-acid polypeptide reads, in one-letter code: UvrABC system protein B (683 aa).

The interval 1–29 is disordered; the sequence is MTDTGPLQPDRPDLDRPLSVDAPFEPAGD. The Helicase ATP-binding domain occupies 39 to 417; that stretch reads AGFESGAEKQ…PGDYERDHSE (379 aa). 52–59 is a binding site for ATP; it reads GVTGSGKT. Positions 105-128 match the Beta-hairpin motif; sequence YYDYYQPEAYVEQTDTYIDKDMSI. The region spanning 442 to 604 is the Helicase C-terminal domain; that stretch reads QVEDLIERIQ…EPRTIEKPVS (163 aa). Positions 587 to 603 are enriched in basic and acidic residues; that stretch reads EFNAEHGHEPRTIEKPV. The tract at residues 587–620 is disordered; sequence EFNAEHGHEPRTIEKPVSETNLPGSSTDTDGVAD. The span at 604–615 shows a compositional bias: polar residues; the sequence is SETNLPGSSTDT. The region spanning 630 to 665 is the UVR domain; the sequence is EQLIERLETRMQEAADNLEFELAADIRDRIRELRET.

Belongs to the UvrB family. In terms of assembly, forms a heterotetramer with UvrA during the search for lesions. Interacts with UvrC in an incision complex.

The protein resides in the cytoplasm. In terms of biological role, the UvrABC repair system catalyzes the recognition and processing of DNA lesions. A damage recognition complex composed of 2 UvrA and 2 UvrB subunits scans DNA for abnormalities. Upon binding of the UvrA(2)B(2) complex to a putative damaged site, the DNA wraps around one UvrB monomer. DNA wrap is dependent on ATP binding by UvrB and probably causes local melting of the DNA helix, facilitating insertion of UvrB beta-hairpin between the DNA strands. Then UvrB probes one DNA strand for the presence of a lesion. If a lesion is found the UvrA subunits dissociate and the UvrB-DNA preincision complex is formed. This complex is subsequently bound by UvrC and the second UvrB is released. If no lesion is found, the DNA wraps around the other UvrB subunit that will check the other stand for damage. The sequence is that of UvrABC system protein B from Natronomonas pharaonis (strain ATCC 35678 / DSM 2160 / CIP 103997 / JCM 8858 / NBRC 14720 / NCIMB 2260 / Gabara) (Halobacterium pharaonis).